A 428-amino-acid polypeptide reads, in one-letter code: Histone deacetylase 3 (428 aa).

The histone deacetylase stretch occupies residues 3-316 (KTVAYFYDPD…WTYETSLLVD (314 aa)). Residues His17, Gly21, and Lys25 each contribute to the 1D-myo-inositol 1,4,5,6-tetrakisphosphate site. The active site involves His135. Zn(2+)-binding residues include Asp170, His172, and Asp259. Residue Arg265 coordinates 1D-myo-inositol 1,4,5,6-tetrakisphosphate. The tract at residues 385–428 (LSYDRTDEPDPEERGSEENYSRPEAANEFYDGDHDNDKESDVEI) is disordered. Basic and acidic residues-rich tracts occupy residues 386 to 405 (SYDR…ENYS) and 415 to 428 (DGDH…DVEI).

The protein belongs to the histone deacetylase family. HD type 1 subfamily.

It localises to the nucleus. Its subcellular location is the chromosome. The protein resides in the cytoplasm. It is found in the cytosol. It catalyses the reaction N(6)-acetyl-L-lysyl-[histone] + H2O = L-lysyl-[histone] + acetate. The enzyme catalyses N(6)-acetyl-L-lysyl-[protein] + H2O = L-lysyl-[protein] + acetate. The catalysed reaction is N(6)-(2E)-butenoyl-L-lysyl-[protein] + H2O = (2E)-2-butenoate + L-lysyl-[protein]. It carries out the reaction N(6)-(2-hydroxyisobutanoyl)-L-lysyl-[protein] + H2O = 2-hydroxy-2-methylpropanoate + L-lysyl-[protein]. It catalyses the reaction N(6)-[(S)-lactoyl]-L-lysyl-[protein] + H2O = (S)-lactate + L-lysyl-[protein]. Its activity is regulated as follows. Inositol tetraphosphate (1D-myo-inositol 1,4,5,6-tetrakisphosphate) promotes the histone deacetylase activity by acting as an intermolecular glue between HDAC3 and N-Cor repressor complex components. In terms of biological role, histone deacetylase that catalyzes the deacetylation of lysine residues on the N-terminal part of the core histones (H2A, H2B, H3 and H4), and some other non-histone substrates. Histone deacetylation gives a tag for epigenetic repression and plays an important role in transcriptional regulation, cell cycle progression and developmental events. Histone deacetylases act via the formation of large multiprotein complexes, such as N-Cor repressor complex, which activate the histone deacetylase activity. Participates in the BCL6 transcriptional repressor activity by deacetylating the H3 'Lys-27' (H3K27) on enhancer elements, antagonizing EP300 acetyltransferase activity and repressing proximal gene expression. Also functions as a deacetylase for non-histone targets. In addition to protein deacetylase activity, also acts as a protein-lysine deacylase by recognizing other acyl groups: catalyzes removal of (2E)-butenoyl (crotonyl), lactoyl (lactyl) and 2-hydroxyisobutanoyl (2-hydroxyisobutyryl) acyl groups from lysine residues, leading to protein decrotonylation, delactylation and de-2-hydroxyisobutyrylation, respectively. The sequence is that of Histone deacetylase 3 (HDAC3) from Gallus gallus (Chicken).